Consider the following 350-residue polypeptide: Calcium uniporter protein, mitochondrial (350 aa).

The transit peptide at 1 to 49 (MAAAAGRSLLLLLCSRGGGGGAGGCGALTAGCFPGLGVSRHRPHQQHRT) directs the protein to the mitochondrion. Residues 50–232 (AHQRPASWQS…ISRKAEKRTT (183 aa)) lie on the Mitochondrial matrix side of the membrane. Phosphoserine; by CaMK2 occurs at positions 56 and 91. The interval 74-164 (VTVVYQNGLP…LTYHVRPPKR (91 aa)) is N-terminal MCU domain. C96 is subject to S-glutathionyl cysteine. Residues 191-220 (IEQHQLNKERELVERLEDLKQQLAPLEKVR) adopt a coiled-coil conformation. Residues 233 to 256 (LVLWGGLAYMATQFGILARLTWWE) traverse the membrane as a helical segment. At 257-264 (YSWDIMEP) the chain is on the mitochondrial intermembrane side. Positions 259-267 (WDIMEPVTY) match the Selectivity filter motif. E263 serves as a coordination point for Ca(2+). Residues 265–282 (VTYFITYGSAMAMYAYFV) traverse the membrane as a helical segment. Residues 283 to 350 (MTRQEYVYPE…LPLRQIGEKE (68 aa)) lie on the Mitochondrial matrix side of the membrane. A juxtamembrane helix region spans residues 284–289 (TRQEYV). Residues 310–338 (RFDLEKYNQLKDAIAQAEMDLKRLRDPLQ) adopt a coiled-coil conformation. K331 is subject to N6-acetyllysine.

Belongs to the MCU (TC 1.A.77) family. As to quaternary structure, homotetramer. Component of the uniplex complex, composed of MCU, EMRE/SMDT1, MICU1 and MICU2 (or MICU3) in a 4:4:1:1 stoichiometry. Interacts with CCDC109B/MCUB; this inhibits channel activity. Interacts with MCUR1. Interactions with MICU1 and MCUR1 are mutually exclusive. Interacts with SLC25A23. Phosphorylation by CaMK2 in heart leads to increased MCU current. The regulation of MCU by CaMK2 is however subject to discussion: another group was unable to reproduce these results. Phosphorylated on tyrosines by PTK2B/PYK2, promoting oligomerization. In terms of processing, glutathionylation at Cys-96 in response to reactive oxygen species (ROS) promotes MCU higher-order assembly, leading to constitutive activation of the MCU channel and mitochondrial calcium overload. Post-translationally, undergoes proteolytic degradation by SPG7. As to expression, detected in heart muscle (at protein level). Expressed in skeletal muscle, heart, kidney, liver, brain, lung, white fat and spleen.

It localises to the mitochondrion inner membrane. It catalyses the reaction Ca(2+)(in) = Ca(2+)(out). MCU channel activity is regulated by the heterodimer composed of MICU1 and either MICU2 or MICU3, which act as calcium-sensors. At low calcium levels, MICU1 occludes the pore of the MCU channel, preventing mitochondrial calcium uptake. At higher calcium levels, calcium-binding to MICU1 and MICU2 (or MICU3) induces a conformational change that weakens MCU-MICU1 interactions and moves the MICU1-MICU2 heterodimer away from the pore, allowing calcium permeation through the channel. MCU channel activity is gated by EMRE/SMDT1 via the juxtamembrane helix loop. Inhibited by ruthenium red or its derivative Ru360. In terms of biological role, channel-forming and calcium-conducting subunit of the mitochondrial inner membrane calcium uniporter complex (uniplex), which mediates calcium uptake into the mitochondrial matrix. MCU channel activity is regulated by the calcium-sensor subunits of the uniplex MICU1 and MICU2 (or MICU3). Mitochondrial calcium homeostasis plays key roles in cellular physiology and regulates ATP production, cytoplasmic calcium signals and activation of cell death pathways. Involved in buffering the amplitude of systolic calcium rises in cardiomyocytes. While dispensable for baseline homeostatic cardiac function, acts as a key regulator of short-term mitochondrial calcium loading underlying a 'fight-or-flight' response during acute stress: acts by mediating a rapid increase of mitochondrial calcium in pacemaker cells. Participates in mitochondrial permeability transition during ischemia-reperfusion injury. Mitochondrial calcium uptake in skeletal muscle cells is involved in muscle size in adults. Regulates synaptic vesicle endocytosis kinetics in central nerve terminal. Regulates glucose-dependent insulin secretion in pancreatic beta-cells by regulating mitochondrial calcium uptake. Involved in antigen processing and presentation. The sequence is that of Calcium uniporter protein, mitochondrial from Mus musculus (Mouse).